A 303-amino-acid chain; its full sequence is Major fimbrium anchoring subunit FimB (303 aa).

A signal peptide spans 1-22 (MNDAKKYIVSVLILLVAGMFGG). Cys-23 carries N-palmitoyl cysteine lipidation. Cys-23 is lipidated: S-diacylglycerol cysteine.

It belongs to the bacteroidetes fimbrillin superfamily. FimB/Mfa2 family. As to quaternary structure, fimB is not part of the fimbrium itself, but anchors the fimbrium in the outer membrane. Linear, head-to-tail oligomerization of fimbrial subunits mediates assembly of the fimbrium stalk, while the minor components FimC, FimD and FimE probably form the fimbrium tip. The anchoring subunit FimB limits fimbrium length and is important for solid fimbrium attachment to the outer membrane. In its absence, the major fimbriae become very long and are easily detached from the membrane.

The protein resides in the cell outer membrane. Anchoring subunit of the major fimbriae. Regulates fimbrial length. These filamentous pili are attached to the cell surface; they mediate biofilm formation, adhesion onto host cells and onto other bacteria that are part of the oral microbiome. Fimbriae of P.gingivalis are major virulence factors. The sequence is that of Major fimbrium anchoring subunit FimB from Porphyromonas gingivalis (strain ATCC BAA-308 / W83).